We begin with the raw amino-acid sequence, 207 residues long: ATP-dependent Clp protease proteolytic subunit (207 aa).

Ser-111 acts as the Nucleophile in catalysis. His-136 is an active-site residue.

Belongs to the peptidase S14 family. As to quaternary structure, fourteen ClpP subunits assemble into 2 heptameric rings which stack back to back to give a disk-like structure with a central cavity, resembling the structure of eukaryotic proteasomes.

The protein localises to the cytoplasm. The catalysed reaction is Hydrolysis of proteins to small peptides in the presence of ATP and magnesium. alpha-casein is the usual test substrate. In the absence of ATP, only oligopeptides shorter than five residues are hydrolyzed (such as succinyl-Leu-Tyr-|-NHMec, and Leu-Tyr-Leu-|-Tyr-Trp, in which cleavage of the -Tyr-|-Leu- and -Tyr-|-Trp bonds also occurs).. In terms of biological role, cleaves peptides in various proteins in a process that requires ATP hydrolysis. Has a chymotrypsin-like activity. Plays a major role in the degradation of misfolded proteins. The protein is ATP-dependent Clp protease proteolytic subunit of Burkholderia mallei (strain ATCC 23344).